Reading from the N-terminus, the 239-residue chain is MLVIPAIDLQSGRCVRLKQGRFDQVTQFSVFPIERALHFAKLGAKRLHVVDLDGARSGKMQQLELICSMQKTGIPIQAGGGIRSIEQALECSSAGISQLVIGSLAITNTDLTIQIIEKIKPENIVLALDVRVDTKVPLLAINGWQNNSTSSLWEVVSYYENYGIKNILCTDIACDGMMNGPNFDLYQQAVEYFPQIAWQASGGIRHMQDITTLGSLGISAVILGLMLYQDNVSFEELLC.

The Proton acceptor role is filled by Asp8. Asp129 (proton donor) is an active-site residue.

Belongs to the HisA/HisF family.

The protein localises to the cytoplasm. It carries out the reaction 1-(5-phospho-beta-D-ribosyl)-5-[(5-phospho-beta-D-ribosylamino)methylideneamino]imidazole-4-carboxamide = 5-[(5-phospho-1-deoxy-D-ribulos-1-ylimino)methylamino]-1-(5-phospho-beta-D-ribosyl)imidazole-4-carboxamide. The protein operates within amino-acid biosynthesis; L-histidine biosynthesis; L-histidine from 5-phospho-alpha-D-ribose 1-diphosphate: step 4/9. In Legionella pneumophila (strain Corby), this protein is 1-(5-phosphoribosyl)-5-[(5-phosphoribosylamino)methylideneamino] imidazole-4-carboxamide isomerase.